The chain runs to 502 residues: UDP-N-acetylmuramate--L-alanine ligase (502 aa).

120-126 provides a ligand contact to ATP; the sequence is GTHGKTS.

This sequence belongs to the MurCDEF family.

It localises to the cytoplasm. It carries out the reaction UDP-N-acetyl-alpha-D-muramate + L-alanine + ATP = UDP-N-acetyl-alpha-D-muramoyl-L-alanine + ADP + phosphate + H(+). It participates in cell wall biogenesis; peptidoglycan biosynthesis. Functionally, cell wall formation. The sequence is that of UDP-N-acetylmuramate--L-alanine ligase from Rhodococcus erythropolis (strain PR4 / NBRC 100887).